The sequence spans 277 residues: Tumor necrosis factor receptor superfamily member 4 (277 aa).

The signal sequence occupies residues 1–28 (MCVGARRLGRGPCAALLLLGLGLSTVTG). Over 29-214 (LHCVGDTYPS…RPVEVPGGRA (186 aa)) the chain is Extracellular. TNFR-Cys repeat units follow at residues 30–65 (HCVGDTYPSNDRCCHECRPGNGMVSRCSRSQNTVCR) and 66–107 (PCGP…DTVC). 8 disulfides stabilise this stretch: C31/C42, C43/C56, C46/C64, C67/C81, C84/C99, C87/C107, C109/C125, and C128/C141. Residues 108–126 (RCRAGTQPLDSYKPGVDCA) form a TNFR-Cys 3; truncated repeat. Residues 127 to 167 (PCPPGHFSPGDNQACKPWTNCTLAGKHTLQPASNSSDAICE) form a TNFR-Cys 4 repeat. N146 and N160 each carry an N-linked (GlcNAc...) asparagine glycan. C147 and C166 are disulfide-bonded. The tract at residues 158 to 209 (ASNSSDAICEDRDPPATQPQETQGPPARPITVQPTEAWPRTSQGPSTRPVEV) is disordered. A helical membrane pass occupies residues 215-235 (VAAILGLGLVLGLLGPLAILL). Topologically, residues 236 to 277 (ALYLLRRDQRLPPDAHKPPGGGSFRTPIQEEQADAHSTLAKI) are cytoplasmic. The segment at 248 to 277 (PDAHKPPGGGSFRTPIQEEQADAHSTLAKI) is disordered.

Interacts with TRAF2, TRAF3 and TRAF5. In terms of assembly, (Microbial infection) Interacts with Human herpesvirus 6B/HHV-6B gQ1:gQ2 proteins.

The protein localises to the membrane. Functionally, receptor for TNFSF4/OX40L/GP34. Is a costimulatory molecule implicated in long-term T-cell immunity. In terms of biological role, (Microbial infection) Acts as a receptor for human herpesvirus 6B/HHV-6B. The chain is Tumor necrosis factor receptor superfamily member 4 (TNFRSF4) from Homo sapiens (Human).